A 167-amino-acid polypeptide reads, in one-letter code: Respiratory supercomplex factor 1-A, mitochondrial (167 aa).

Residues 1-86 enclose the HIG1 domain; the sequence is MCSDFEEETS…TERKQRREFE (86 aa). A run of 2 helical transmembrane segments spans residues 21 to 38 and 53 to 75; these read EPLI…LYRA and MFRA…GMYY. Residues 75–107 adopt a coiled-coil conformation; it reads YKTERKQRREFEKKVEERKAQEKRDAWLRELEA.

Belongs to the RCF1 family. As to quaternary structure, associates with the respiratory chain complex III/complex IV supercomplex.

It localises to the mitochondrion membrane. In terms of biological role, cytochrome c oxidase subunit which plays a role in assembly of respiratory supercomplexes. In Talaromyces marneffei (strain ATCC 18224 / CBS 334.59 / QM 7333) (Penicillium marneffei), this protein is Respiratory supercomplex factor 1-A, mitochondrial (rcf1-A).